A 276-amino-acid chain; its full sequence is MQQHIVEEMKVKVSIDPVEEIKKRVDFIKGKLLEAHCKSLILGISGGVDSTTCGRLAQLAVNELNLETQSSDYQFIAVRLPYGIQQDEDEAQLALQFIQPTHSISINIKDGVDGLHSANHIALQDTGLLPTDSAKIDFVKGNVKARARMIAQYEVAGYVGGLVLGTDHSAENITGFYTKFGDGACDLAPLFGLNKRQVREVAAQLGAPEQLVKKVPTADLEELAPQKADEDALSVSYDQIDDFLEGKKIDADAEARLIKIYQMSQHKRKPIPTIYD.

43 to 50 provides a ligand contact to ATP; sequence GISGGVDS. Residue aspartate 49 participates in Mg(2+) binding. Arginine 146 is a binding site for deamido-NAD(+). Residue threonine 166 coordinates ATP. Glutamate 171 is a binding site for Mg(2+). Lysine 179 and aspartate 186 together coordinate deamido-NAD(+). Residues lysine 195 and threonine 217 each coordinate ATP. 266–267 is a binding site for deamido-NAD(+); the sequence is HK.

The protein belongs to the NAD synthetase family. In terms of assembly, homodimer.

The catalysed reaction is deamido-NAD(+) + NH4(+) + ATP = AMP + diphosphate + NAD(+) + H(+). The protein operates within cofactor biosynthesis; NAD(+) biosynthesis; NAD(+) from deamido-NAD(+) (ammonia route): step 1/1. Functionally, catalyzes the ATP-dependent amidation of deamido-NAD to form NAD. Uses ammonia as a nitrogen source. The sequence is that of NH(3)-dependent NAD(+) synthetase from Aliivibrio fischeri (strain MJ11) (Vibrio fischeri).